The sequence spans 482 residues: tRNA sulfurtransferase (482 aa).

Positions L61–R165 constitute a THUMP domain. ATP is bound by residues L183–I184, K265, G287, and Q296. C344 and C456 are joined by a disulfide. Positions F404 to P482 constitute a Rhodanese domain. The Cysteine persulfide intermediate role is filled by C456.

This sequence belongs to the ThiI family.

It localises to the cytoplasm. The catalysed reaction is [ThiI sulfur-carrier protein]-S-sulfanyl-L-cysteine + a uridine in tRNA + 2 reduced [2Fe-2S]-[ferredoxin] + ATP + H(+) = [ThiI sulfur-carrier protein]-L-cysteine + a 4-thiouridine in tRNA + 2 oxidized [2Fe-2S]-[ferredoxin] + AMP + diphosphate. It catalyses the reaction [ThiS sulfur-carrier protein]-C-terminal Gly-Gly-AMP + S-sulfanyl-L-cysteinyl-[cysteine desulfurase] + AH2 = [ThiS sulfur-carrier protein]-C-terminal-Gly-aminoethanethioate + L-cysteinyl-[cysteine desulfurase] + A + AMP + 2 H(+). Its pathway is cofactor biosynthesis; thiamine diphosphate biosynthesis. Functionally, catalyzes the ATP-dependent transfer of a sulfur to tRNA to produce 4-thiouridine in position 8 of tRNAs, which functions as a near-UV photosensor. Also catalyzes the transfer of sulfur to the sulfur carrier protein ThiS, forming ThiS-thiocarboxylate. This is a step in the synthesis of thiazole, in the thiamine biosynthesis pathway. The sulfur is donated as persulfide by IscS. The polypeptide is tRNA sulfurtransferase (Escherichia coli (strain 55989 / EAEC)).